The chain runs to 109 residues: Phosphoribosyl-AMP cyclohydrolase (109 aa).

Residue Asp-76 participates in Mg(2+) binding. Cys-77 contacts Zn(2+). Positions 78 and 80 each coordinate Mg(2+). Residues Cys-93 and Cys-100 each contribute to the Zn(2+) site.

This sequence belongs to the PRA-CH family. In terms of assembly, homodimer. It depends on Mg(2+) as a cofactor. Zn(2+) is required as a cofactor.

It localises to the cytoplasm. It carries out the reaction 1-(5-phospho-beta-D-ribosyl)-5'-AMP + H2O = 1-(5-phospho-beta-D-ribosyl)-5-[(5-phospho-beta-D-ribosylamino)methylideneamino]imidazole-4-carboxamide. It functions in the pathway amino-acid biosynthesis; L-histidine biosynthesis; L-histidine from 5-phospho-alpha-D-ribose 1-diphosphate: step 3/9. Functionally, catalyzes the hydrolysis of the adenine ring of phosphoribosyl-AMP. This Streptococcus mutans serotype c (strain ATCC 700610 / UA159) protein is Phosphoribosyl-AMP cyclohydrolase.